Reading from the N-terminus, the 370-residue chain is MADPRDLQLSAYDYELPEARIAQRPVEPRHAAKLLMVPPLEASSLQGRHGTVWDWQNELRSGDLLVVNDTRVLQARLRVRRSGGGLGELLVLEPRGEGRWLCLARPGKKLRPGDQVWLEALEQDPLPLQVLASDPASGGRIVQFPPAFVDAMAIEALLQRYGEVPLPPYITCHDDSDQERYQTRYASRPGAVAAPTAGLHLSDDLLQAIRARGVQMSSVTLHVGLGTFRPVETEDLSELSLHSEWVEVSTQLVEAVQACRQRGGRVIAVGTTSVRALEGAAAAGGGDLQPLKGPVDLVIQPGYQFRVVDGLLTNFHLPKSSLLLLVSALIGRERLLDLYALAIANDYRFYSYGDAMWIAPGAVLMDARPR.

The protein belongs to the QueA family. As to quaternary structure, monomer.

It is found in the cytoplasm. It carries out the reaction 7-aminomethyl-7-carbaguanosine(34) in tRNA + S-adenosyl-L-methionine = epoxyqueuosine(34) in tRNA + adenine + L-methionine + 2 H(+). It participates in tRNA modification; tRNA-queuosine biosynthesis. Functionally, transfers and isomerizes the ribose moiety from AdoMet to the 7-aminomethyl group of 7-deazaguanine (preQ1-tRNA) to give epoxyqueuosine (oQ-tRNA). The chain is S-adenosylmethionine:tRNA ribosyltransferase-isomerase from Synechococcus sp. (strain WH7803).